Here is a 236-residue protein sequence, read N- to C-terminus: uncharacterized protein (236 aa).

To E.coli YfjP and YkfA.

This is an uncharacterized protein from Escherichia coli (strain K12).